Reading from the N-terminus, the 218-residue chain is Ribose-5-phosphate isomerase A (218 aa).

Substrate is bound by residues 28 to 31, 81 to 84, and 94 to 97; these read TGST, DGAD, and KGGG. E103 (proton acceptor) is an active-site residue. Substrate is bound at residue K121.

Belongs to the ribose 5-phosphate isomerase family. Homodimer.

The enzyme catalyses aldehydo-D-ribose 5-phosphate = D-ribulose 5-phosphate. It participates in carbohydrate degradation; pentose phosphate pathway; D-ribose 5-phosphate from D-ribulose 5-phosphate (non-oxidative stage): step 1/1. In terms of biological role, catalyzes the reversible conversion of ribose-5-phosphate to ribulose 5-phosphate. The polypeptide is Ribose-5-phosphate isomerase A (Aliivibrio salmonicida (strain LFI1238) (Vibrio salmonicida (strain LFI1238))).